A 396-amino-acid polypeptide reads, in one-letter code: Ornithine aminotransferase 2 (396 aa).

Lysine 255 carries the post-translational modification N6-(pyridoxal phosphate)lysine.

It belongs to the class-III pyridoxal-phosphate-dependent aminotransferase family. OAT subfamily. Requires pyridoxal 5'-phosphate as cofactor.

The protein resides in the cytoplasm. It catalyses the reaction a 2-oxocarboxylate + L-ornithine = L-glutamate 5-semialdehyde + an L-alpha-amino acid. Its pathway is amino-acid biosynthesis; L-proline biosynthesis; L-glutamate 5-semialdehyde from L-ornithine: step 1/1. Catalyzes the interconversion of ornithine to glutamate semialdehyde. The chain is Ornithine aminotransferase 2 from Staphylococcus aureus (strain MRSA252).